A 464-amino-acid polypeptide reads, in one-letter code: Glutamate--tRNA ligase (464 aa).

Positions 11-21 match the 'HIGH' region motif; the sequence is PSPTGFIHLGN. The 'KMSKS' region signature appears at 243–247; sequence KMSKR. Lysine 246 is a binding site for ATP.

This sequence belongs to the class-I aminoacyl-tRNA synthetase family. Glutamate--tRNA ligase type 1 subfamily. As to quaternary structure, monomer.

It localises to the cytoplasm. It carries out the reaction tRNA(Glu) + L-glutamate + ATP = L-glutamyl-tRNA(Glu) + AMP + diphosphate. In terms of biological role, catalyzes the attachment of glutamate to tRNA(Glu) in a two-step reaction: glutamate is first activated by ATP to form Glu-AMP and then transferred to the acceptor end of tRNA(Glu). The polypeptide is Glutamate--tRNA ligase (Polaromonas naphthalenivorans (strain CJ2)).